The primary structure comprises 118 residues: uncharacterized protein (118 aa).

Transmembrane regions (helical) follow at residues 20-39 (VEGPLAGLIIILIALLLLWI), 46-63 (LVVVLIGAVVGYFVGEAV), and 67-85 (LSLVFAAGFAIVGIWAMSG). Residues 85 to 118 (GDKSKKKGKKQRSILKDADDWDDDSWDDEGDWDE) are disordered. Residues 88-97 (SKKKGKKQRS) show a composition bias toward basic residues. Residues 103–118 (DDWDDDSWDDEGDWDE) are compositionally biased toward acidic residues.

Its subcellular location is the cell membrane. This is an uncharacterized protein from Archaeoglobus fulgidus (strain ATCC 49558 / DSM 4304 / JCM 9628 / NBRC 100126 / VC-16).